Reading from the N-terminus, the 414-residue chain is Glucose-1-phosphate adenylyltransferase (414 aa).

Residues Tyr99, Gly164, 181–182 (EK), and Ser199 each bind alpha-D-glucose 1-phosphate.

Belongs to the bacterial/plant glucose-1-phosphate adenylyltransferase family. As to quaternary structure, homotetramer.

The catalysed reaction is alpha-D-glucose 1-phosphate + ATP + H(+) = ADP-alpha-D-glucose + diphosphate. It participates in glycan biosynthesis; glycogen biosynthesis. Involved in the biosynthesis of ADP-glucose, a building block required for the elongation reactions to produce glycogen. Catalyzes the reaction between ATP and alpha-D-glucose 1-phosphate (G1P) to produce pyrophosphate and ADP-Glc. This is Glucose-1-phosphate adenylyltransferase from Bifidobacterium adolescentis (strain ATCC 15703 / DSM 20083 / NCTC 11814 / E194a).